Reading from the N-terminus, the 253-residue chain is Eukaryotic initiation factor 4A-6 (253 aa).

One can recognise a Helicase ATP-binding domain in the interval 1–82 (HVVVGTPGRV…RKFMNKPVRI (82 aa)). Positions 30 to 33 (DEAD) match the DEAD box motif. The Helicase C-terminal domain maps to 93 to 253 (GIKQFYVNVD…EELPANVADL (161 aa)).

Belongs to the DEAD box helicase family. eIF4A subfamily. In terms of assembly, eIF4F is a multi-subunit complex, the composition of which varies with external and internal environmental conditions. It is composed of at least EIF4A, EIF4E and EIF4G.

The catalysed reaction is ATP + H2O = ADP + phosphate + H(+). ATP-dependent RNA helicase which is a subunit of the eIF4F complex involved in cap recognition and is required for mRNA binding to ribosome. In the current model of translation initiation, eIF4A unwinds RNA secondary structures in the 5'-UTR of mRNAs which is necessary to allow efficient binding of the small ribosomal subunit, and subsequent scanning for the initiator codon. In Nicotiana tabacum (Common tobacco), this protein is Eukaryotic initiation factor 4A-6.